Consider the following 143-residue polypeptide: Large ribosomal subunit protein uL16 (143 aa).

Positions 1 to 17 (MLQPKRTKFRKAHKGRI) are enriched in basic residues. The disordered stretch occupies residues 1-20 (MLQPKRTKFRKAHKGRIHGN).

The protein belongs to the universal ribosomal protein uL16 family. Part of the 50S ribosomal subunit.

Binds 23S rRNA and is also seen to make contacts with the A and possibly P site tRNAs. In Zymomonas mobilis subsp. mobilis (strain ATCC 31821 / ZM4 / CP4), this protein is Large ribosomal subunit protein uL16.